A 211-amino-acid polypeptide reads, in one-letter code: Urease accessory protein UreF (211 aa).

Residues 71–93 (DDADRETDARTPAPAARHASRSQ) are disordered.

This sequence belongs to the UreF family. As to quaternary structure, ureD, UreF and UreG form a complex that acts as a GTP-hydrolysis-dependent molecular chaperone, activating the urease apoprotein by helping to assemble the nickel containing metallocenter of UreC. The UreE protein probably delivers the nickel.

It localises to the cytoplasm. In terms of biological role, required for maturation of urease via the functional incorporation of the urease nickel metallocenter. The polypeptide is Urease accessory protein UreF (Mycobacterium bovis (strain ATCC BAA-935 / AF2122/97)).